The sequence spans 705 residues: Elongation factor G (705 aa).

The tr-type G domain maps to 8 to 289 (VNYRNIGISA…TVINYLPSPK (282 aa)). Residues 17–24 (AHIDAGKT), 88–92 (DTPGH), and 142–145 (NKMD) contribute to the GTP site.

It belongs to the TRAFAC class translation factor GTPase superfamily. Classic translation factor GTPase family. EF-G/EF-2 subfamily.

The protein localises to the cytoplasm. Its function is as follows. Catalyzes the GTP-dependent ribosomal translocation step during translation elongation. During this step, the ribosome changes from the pre-translocational (PRE) to the post-translocational (POST) state as the newly formed A-site-bound peptidyl-tRNA and P-site-bound deacylated tRNA move to the P and E sites, respectively. Catalyzes the coordinated movement of the two tRNA molecules, the mRNA and conformational changes in the ribosome. The protein is Elongation factor G of Wigglesworthia glossinidia brevipalpis.